Reading from the N-terminus, the 688-residue chain is G-protein coupled receptor-associated protein LMBRD2 (688 aa).

The Extracellular segment spans residues 1 to 3 (MSG). The helical transmembrane segment at 4–21 (AALGLEIVFVFFLALFLL) threads the bilayer. The Cytoplasmic portion of the chain corresponds to 22–32 (HRYGDFKKQHR). A helical transmembrane segment spans residues 33–53 (LVIIATLLAWYLCFLIVFILP). At 54 to 99 (LDVSTTIYNRCKLAVNSSPAESNSSFVTLAPSKQQCFKPWSYIPNG) the chain is on the extracellular side. The N-linked (GlcNAc...) asparagine glycan is linked to asparagine 76. Residues 100–120 (IMPIFWRVVYWTSQFLTWILL) form a helical membrane-spanning segment. The Cytoplasmic portion of the chain corresponds to 121–144 (PFMQSYARSGGFSITGKIKTALIE). Residues 145–165 (NAIYYGTYLLIFGAFLIYVAV) form a helical membrane-spanning segment. Over 166–180 (NPKFNLQWNQLQTIG) the chain is Extracellular. The chain crosses the membrane as a helical span at residues 181 to 201 (IAAANTWGLFLLVLLLGYGLV). At 202-381 (EIPRSHWNGA…ECLLRPWFYR (180 aa)) the chain is on the cytoplasmic side. Residues 222 to 254 (FKAAKLMTEKADAEENLEDIMEEVRKVSESIKY) are a coiled coil. Residues 382–402 (VLAVVLAAFSVIVVWSECTFF) traverse the membrane as a helical segment. At 403-426 (STRPVLSLVAVFIQLAEKTYNYIY) the chain is on the extracellular side. Residues 427–447 (IEMACFLTIFFLSICVYSTVF) traverse the membrane as a helical segment. Over 448-467 (RIRVFNYYYLASHHQTDAYS) the chain is Cytoplasmic. The chain crosses the membrane as a helical span at residues 468-488 (LLFSGMLFCRLTPPLCLNFLG). The Extracellular segment spans residues 489-515 (LTHMDATISHTDAQPTAYTSIMGSMKV). A helical transmembrane segment spans residues 516-536 (LSFIADGFYIYYPMLVVILCI). At 537–688 (ATYFSLGTRC…MSRSRIFEDV (152 aa)) the chain is on the cytoplasmic side. Positions 600 to 617 (REDSTRNRVVHTEQKESS) are enriched in basic and acidic residues. The disordered stretch occupies residues 600 to 673 (REDSTRNRVV…ESDSGRYQPG (74 aa)). The segment covering 618-634 (FSETNTNRPLSKYTRTN) has biased composition (polar residues). The segment covering 635–644 (GRTERDRIEL) has biased composition (basic and acidic residues).

The protein belongs to the LIMR family.

The protein resides in the cell membrane. Its function is as follows. May associate with G-protein coupled receptors and regulate downstream signaling pathways. The polypeptide is G-protein coupled receptor-associated protein LMBRD2 (Gallus gallus (Chicken)).